The chain runs to 329 residues: Elongation factor Ts (329 aa).

Residues 79-82 (TDFV) are involved in Mg(2+) ion dislocation from EF-Tu.

This sequence belongs to the EF-Ts family.

It is found in the cytoplasm. Functionally, associates with the EF-Tu.GDP complex and induces the exchange of GDP to GTP. It remains bound to the aminoacyl-tRNA.EF-Tu.GTP complex up to the GTP hydrolysis stage on the ribosome. The chain is Elongation factor Ts from Parabacteroides distasonis (strain ATCC 8503 / DSM 20701 / CIP 104284 / JCM 5825 / NCTC 11152).